A 954-amino-acid polypeptide reads, in one-letter code: Zinc finger protein 618 (954 aa).

Met-1 carries the N-acetylmethionine modification. Residues 1 to 19 (MNQPGGAAAPQADGASAAG) show a composition bias toward low complexity. A disordered region spans residues 1–56 (MNQPGGAAAPQADGASAAGRKSTASRERLKRSQKSTKVEGPEPVPAEASLSAEQGT). Residues Lys-63 and Lys-81 each participate in a glycyl lysine isopeptide (Lys-Gly) (interchain with G-Cter in SUMO2) cross-link. 2 consecutive C2H2-type zinc fingers follow at residues 147-169 (YECG…VRAH) and 188-210 (YTCD…RDLH). A Glycyl lysine isopeptide (Lys-Gly) (interchain with G-Cter in SUMO2) cross-link involves residue Lys-239. The C2H2-type 3 zinc finger occupies 256–278 (YTCEFCGKQYKYYTPYQEHVALH). Disordered regions lie at residues 282–307 (STAP…VSPS) and 337–390 (RTPP…NSSE). Over residues 340–357 (PATQTQTFRTPNSGSPAS) the composition is skewed to polar residues. The span at 366–380 (FSRRVEGKAQNHFEE) shows a compositional bias: basic and acidic residues. The segment at 392–414 (YTCGACGIQFQFYNNLLEHMQSH) adopts a C2H2-type 4 zinc-finger fold. A disordered region spans residues 421–463 (NIASNQSRSPPAVVEEKWKPQAQRNSANNTTTSGLTPNSMIPE). Residue Lys-437 forms a Glycyl lysine isopeptide (Lys-Gly) (interchain with G-Cter in SUMO2) linkage. The segment covering 442–459 (AQRNSANNTTTSGLTPNS) has biased composition (polar residues).

The protein belongs to the krueppel C2H2-type zinc-finger protein family. In terms of assembly, interacts with UHRF2.

The protein localises to the nucleus. It is found in the chromosome. In terms of biological role, regulates UHRF2 function as a specific 5-hydroxymethylcytosine (5hmC) reader by regulating its chromatin localization. This Homo sapiens (Human) protein is Zinc finger protein 618 (ZNF618).